The following is a 329-amino-acid chain: DNA-directed RNA polymerase subunit alpha (329 aa).

The tract at residues 1 to 235 (MQGFVEDFLK…QQLEAFVDLR (235 aa)) is alpha N-terminal domain (alpha-NTD). The tract at residues 249–329 (FEPVLLRPVD…NWPPKSLLED (81 aa)) is alpha C-terminal domain (alpha-CTD).

The protein belongs to the RNA polymerase alpha chain family. In terms of assembly, homodimer. The RNAP catalytic core consists of 2 alpha, 1 beta, 1 beta' and 1 omega subunit. When a sigma factor is associated with the core the holoenzyme is formed, which can initiate transcription.

It catalyses the reaction RNA(n) + a ribonucleoside 5'-triphosphate = RNA(n+1) + diphosphate. In terms of biological role, DNA-dependent RNA polymerase catalyzes the transcription of DNA into RNA using the four ribonucleoside triphosphates as substrates. The sequence is that of DNA-directed RNA polymerase subunit alpha from Buchnera aphidicola subsp. Cinara cedri (strain Cc).